Here is a 293-residue protein sequence, read N- to C-terminus: Phosphatidylserine decarboxylase proenzyme (293 aa).

Residues Asp-88, His-144, and Ser-247 each act as charge relay system; for autoendoproteolytic cleavage activity in the active site. The active-site Schiff-base intermediate with substrate; via pyruvic acid; for decarboxylase activity is the Ser-247. Position 247 is a pyruvic acid (Ser); by autocatalysis (Ser-247).

This sequence belongs to the phosphatidylserine decarboxylase family. PSD-B subfamily. Prokaryotic type I sub-subfamily. As to quaternary structure, heterodimer of a large membrane-associated beta subunit and a small pyruvoyl-containing alpha subunit. Pyruvate is required as a cofactor. In terms of processing, is synthesized initially as an inactive proenzyme. Formation of the active enzyme involves a self-maturation process in which the active site pyruvoyl group is generated from an internal serine residue via an autocatalytic post-translational modification. Two non-identical subunits are generated from the proenzyme in this reaction, and the pyruvate is formed at the N-terminus of the alpha chain, which is derived from the carboxyl end of the proenzyme. The autoendoproteolytic cleavage occurs by a canonical serine protease mechanism, in which the side chain hydroxyl group of the serine supplies its oxygen atom to form the C-terminus of the beta chain, while the remainder of the serine residue undergoes an oxidative deamination to produce ammonia and the pyruvoyl prosthetic group on the alpha chain. During this reaction, the Ser that is part of the protease active site of the proenzyme becomes the pyruvoyl prosthetic group, which constitutes an essential element of the active site of the mature decarboxylase.

The protein resides in the cell membrane. It carries out the reaction a 1,2-diacyl-sn-glycero-3-phospho-L-serine + H(+) = a 1,2-diacyl-sn-glycero-3-phosphoethanolamine + CO2. Its pathway is phospholipid metabolism; phosphatidylethanolamine biosynthesis; phosphatidylethanolamine from CDP-diacylglycerol: step 2/2. Catalyzes the formation of phosphatidylethanolamine (PtdEtn) from phosphatidylserine (PtdSer). The polypeptide is Phosphatidylserine decarboxylase proenzyme (Xylella fastidiosa (strain M23)).